Consider the following 311-residue polypeptide: Malate dehydrogenase (311 aa).

NAD(+) contacts are provided by residues 7–13 (GAAGGIG) and aspartate 34. Residues arginine 81 and arginine 87 each coordinate substrate. Residues asparagine 94 and 117 to 119 (ITN) each bind NAD(+). Substrate-binding residues include asparagine 119 and arginine 153. Histidine 177 functions as the Proton acceptor in the catalytic mechanism. Methionine 227 contacts NAD(+).

It belongs to the LDH/MDH superfamily. MDH type 1 family. Homodimer.

The enzyme catalyses (S)-malate + NAD(+) = oxaloacetate + NADH + H(+). Functionally, catalyzes the reversible oxidation of malate to oxaloacetate. The protein is Malate dehydrogenase of Haemophilus influenzae (strain 86-028NP).